A 1146-amino-acid polypeptide reads, in one-letter code: Myosin heavy chain kinase A (1146 aa).

A disordered region spans residues 1-25 (MFNIKKRKESITGIPPINVNSPQSV). Residues 100-120 (EQMEDQLEKTMKVVRNHTDSL) are a coiled coil. The interval 158–191 (IQEKKSTSSPLVKGGISGGGGSGGDDSFDGANIS) is disordered. Residues 172–181 (GISGGGGSGG) show a composition bias toward gly residues. Coiled-coil stretches lie at residues 187–241 (GANI…KRIE) and 297–502 (SKIE…ASIS). The interval 500 to 551 (SISPISSVPKSPITTKRSSIILNSPPMTSQQSSPKIQDLLSSSGSSSVSGIN) is pseudosubstrate/autoinhibitory domain. A compositionally biased stretch (polar residues) spans 521–534 (LNSPPMTSQQSSPK). Residues 521–540 (LNSPPMTSQQSSPKIQDLLS) are disordered. Residues 552–852 (ISSETGEMGI…KVGAKQLPKA (301 aa)) are catalytic. An Alpha-type protein kinase domain is found at 564 to 808 (EFDPIINKWI…VCALLDLDVK (245 aa)). An ATP-binding site is contributed by 778–783 (GLGNLG). WD repeat units follow at residues 867–897 (SFRE…RVFD), 910–938 (GHRK…KVHI), 952–980 (GHTG…KVWD), 993–1021 (VHTK…YVWD), 1033–1061 (GHED…KIWD), 1073–1101 (GHWN…KVWD), and 1114–1142 (SHSL…KVWE).

It belongs to the protein kinase superfamily. Alpha-type protein kinase family. ALPK subfamily. Oligomer. It depends on Mg(2+) as a cofactor. Requires Mn(2+) as cofactor. In terms of processing, the N-terminus is blocked.

The catalysed reaction is L-threonyl-[myosin heavy-chain] + ATP = O-phospho-L-threonyl-[myosin heavy-chain] + ADP + H(+). Catalyzes its autophosphorylation, which is needed for enzymatic activity and phosphorylates myosin II heavy chain at a threonine in the C-terminal tail region. This phosphorylation is critical for regulating the assembly and disassembly of myosin II filament, affecting myosin localization during an array of cellular contractile events, including cytokinesis and capping of cell surface receptors as well as chemotactic cell locomotion. The sequence is that of Myosin heavy chain kinase A (mhkA) from Dictyostelium discoideum (Social amoeba).